Here is a 396-residue protein sequence, read N- to C-terminus: Proteasome-activating nucleotidase (396 aa).

The stretch at 16-57 forms a coiled coil; sequence ITYLKRRIRQLELQVRMLEADKERLERELSRLRSEMSRLRQP. Residues 181–186 and histidine 320 contribute to the ATP site; that span reads GCGKTL. The interval 394-396 is docks into pockets in the proteasome alpha-ring to cause gate opening; the sequence is IYG.

The protein belongs to the AAA ATPase family. In terms of assembly, homohexamer. The hexameric complex has a two-ring architecture resembling a top hat that caps the 20S proteasome core at one or both ends. Upon ATP-binding, the C-terminus of PAN interacts with the alpha-rings of the proteasome core by binding to the intersubunit pockets.

It localises to the cytoplasm. ATPase which is responsible for recognizing, binding, unfolding and translocation of substrate proteins into the archaeal 20S proteasome core particle. Is essential for opening the gate of the 20S proteasome via an interaction with its C-terminus, thereby allowing substrate entry and access to the site of proteolysis. Thus, the C-termini of the proteasomal ATPase function like a 'key in a lock' to induce gate opening and therefore regulate proteolysis. Unfolding activity requires energy from ATP hydrolysis, whereas ATP binding alone promotes ATPase-20S proteasome association which triggers gate opening, and supports translocation of unfolded substrates. This is Proteasome-activating nucleotidase from Pyrococcus abyssi (strain GE5 / Orsay).